The following is a 372-amino-acid chain: Cobalt-precorrin-5B C(1)-methyltransferase (372 aa).

Belongs to the CbiD family.

The catalysed reaction is Co-precorrin-5B + S-adenosyl-L-methionine = Co-precorrin-6A + S-adenosyl-L-homocysteine. It functions in the pathway cofactor biosynthesis; adenosylcobalamin biosynthesis; cob(II)yrinate a,c-diamide from sirohydrochlorin (anaerobic route): step 6/10. Catalyzes the methylation of C-1 in cobalt-precorrin-5B to form cobalt-precorrin-6A. The chain is Cobalt-precorrin-5B C(1)-methyltransferase from Geobacillus thermodenitrificans (strain NG80-2).